A 259-amino-acid polypeptide reads, in one-letter code: 5'-nucleotidase SurE (259 aa).

The a divalent metal cation site is built by D11, D12, S42, and N99.

Belongs to the SurE nucleotidase family. The cofactor is a divalent metal cation.

Its subcellular location is the cytoplasm. It catalyses the reaction a ribonucleoside 5'-phosphate + H2O = a ribonucleoside + phosphate. Nucleotidase that shows phosphatase activity on nucleoside 5'-monophosphates. In Cytophaga hutchinsonii (strain ATCC 33406 / DSM 1761 / CIP 103989 / NBRC 15051 / NCIMB 9469 / D465), this protein is 5'-nucleotidase SurE.